Consider the following 359-residue polypeptide: Phospho-N-acetylmuramoyl-pentapeptide-transferase (359 aa).

10 helical membrane-spanning segments follow: residues Q3–I23, V55–F75, G84–I104, T117–F137, I156–S176, L187–F207, L231–A251, I255–T275, L280–I300, and F334–L354.

It belongs to the glycosyltransferase 4 family. MraY subfamily. Requires Mg(2+) as cofactor.

It localises to the cell membrane. It carries out the reaction UDP-N-acetyl-alpha-D-muramoyl-L-alanyl-gamma-D-glutamyl-meso-2,6-diaminopimeloyl-D-alanyl-D-alanine + di-trans,octa-cis-undecaprenyl phosphate = di-trans,octa-cis-undecaprenyl diphospho-N-acetyl-alpha-D-muramoyl-L-alanyl-D-glutamyl-meso-2,6-diaminopimeloyl-D-alanyl-D-alanine + UMP. It participates in cell wall biogenesis; peptidoglycan biosynthesis. In terms of biological role, catalyzes the initial step of the lipid cycle reactions in the biosynthesis of the cell wall peptidoglycan: transfers peptidoglycan precursor phospho-MurNAc-pentapeptide from UDP-MurNAc-pentapeptide onto the lipid carrier undecaprenyl phosphate, yielding undecaprenyl-pyrophosphoryl-MurNAc-pentapeptide, known as lipid I. This is Phospho-N-acetylmuramoyl-pentapeptide-transferase from Mycobacteroides abscessus (strain ATCC 19977 / DSM 44196 / CCUG 20993 / CIP 104536 / JCM 13569 / NCTC 13031 / TMC 1543 / L948) (Mycobacterium abscessus).